The sequence spans 160 residues: Large ribosomal subunit protein bL17 (160 aa).

The segment covering 123–141 (DEKRQKRAEARAKRREEMQ) has biased composition (basic and acidic residues). The segment at 123–160 (DEKRQKRAEARAKRREEMQKAMAEQQQAEGGEPEGGNE) is disordered. Over residues 142 to 152 (KAMAEQQQAEG) the composition is skewed to low complexity.

This sequence belongs to the bacterial ribosomal protein bL17 family. Part of the 50S ribosomal subunit. Contacts protein L32.

The chain is Large ribosomal subunit protein bL17 from Acidobacterium capsulatum (strain ATCC 51196 / DSM 11244 / BCRC 80197 / JCM 7670 / NBRC 15755 / NCIMB 13165 / 161).